The primary structure comprises 467 residues: Cell division protein FtsP (467 aa).

The segment at residues 1–28 is a signal peptide (tat-type signal); the sequence is MRSLTRRDFLKSGILASSLSCIPQSVMA.

Belongs to the FtsP family. Predicted to be exported by the Tat system. The position of the signal peptide cleavage has not been experimentally proven.

It is found in the periplasm. Its function is as follows. Cell division protein that is required for growth during stress conditions. May be involved in protecting or stabilizing the divisomal assembly under conditions of stress. The protein is Cell division protein FtsP of Histophilus somni (strain 2336) (Haemophilus somnus).